The following is a 501-amino-acid chain: MKFKADEISSIIKERIENFDLNLEIEETGKIISVADGVAKVYGLKNIMAGEMVEFENGDKGMALNLEESSVGIVILGKGEGLKEGASVKRLKKLLKVPVGEALIGRVVNALGEPIDAKGVVNANEYRFVEEKAKGIMARKSVHEPLHTGIKAIDALVPIGRGQRELIIGDRQTGKTTVAVDTIISQRGQGVICIYVAIGQKQSTVAQVVKRLEEHGAMEYTIVVNAGASDPAALQYLAPYAGVTMGEFFRDNAKHALIVYDDLSKHAVAYREMSLILRRPPGREAYPGDVFYLHSRLLERASKLNDELGAGSLTALPIIETQAGDVSAYIPTNVISITDGQIFLETDLFNSGIRPAINVGLSVSRVGGAAQIKATKQVSGTLRLDLAQYRELQAFTQFASDLDEASRKQLERGQRMVELLKQPPYSPLSVEKQVVLIFAGTKGFLDDIAVSRIKEFEDGIYPFIEAKHPDIFEQIRSKKALDSDLEEKLAKAINEFKANHL.

169-176 (GDRQTGKT) contacts ATP.

The protein belongs to the ATPase alpha/beta chains family. As to quaternary structure, F-type ATPases have 2 components, CF(1) - the catalytic core - and CF(0) - the membrane proton channel. CF(1) has five subunits: alpha(3), beta(3), gamma(1), delta(1), epsilon(1). CF(0) has three main subunits: a(1), b(2) and c(9-12). The alpha and beta chains form an alternating ring which encloses part of the gamma chain. CF(1) is attached to CF(0) by a central stalk formed by the gamma and epsilon chains, while a peripheral stalk is formed by the delta and b chains.

It is found in the cell inner membrane. It carries out the reaction ATP + H2O + 4 H(+)(in) = ADP + phosphate + 5 H(+)(out). Its function is as follows. Produces ATP from ADP in the presence of a proton gradient across the membrane. The alpha chain is a regulatory subunit. In Campylobacter jejuni subsp. doylei (strain ATCC BAA-1458 / RM4099 / 269.97), this protein is ATP synthase subunit alpha.